We begin with the raw amino-acid sequence, 732 residues long: Nephrocystin-1 (732 aa).

Positions 3-105 (ARRQRDPLQA…LQGLAVTISR (103 aa)) form a coiled coil. Tyrosine 46 is modified (phosphotyrosine; by FAK2). Disordered regions lie at residues 103-153 (ISRE…KWST) and 205-244 (TYLE…KQRT). Composition is skewed to acidic residues over residues 115 to 145 (TEEE…EKEE) and 210 to 236 (YSEE…ETAD). Residues serine 121, serine 123, and serine 126 each carry the phosphoserine; by CK2 modification. Residues 127 to 150 (EDSGGEEEDAEEEEEEKEENESHK) are a coiled coil. An SH3 domain is found at 152-212 (STGEEYIAVG…PRTYLEPYSE (61 aa)). Phosphotyrosine; by FAK2 is present on tyrosine 349. At tyrosine 721 the chain carries Phosphotyrosine; by SRC.

This sequence belongs to the nephrocystin-1 family. Interacts with BCAR1, PTK2B/PYK2 and tensin. Interacts with INVS and NPHP3. Interacts with PACS1; the interaction is dependent on NPHP1 phosphorylation by CK2. Interacts with KIF7. Interacts with AHI1 and TNK2. Interacts with NPHP4 in a complex containing NPHP1, NPHP4 and RPGRIP1L. Interacts with IQCB1; the interaction likely requires additional interactors. Interacts with ANKS3. Interacts with SPATA7. Interacts with FLNA. Post-translationally, phosphorylation by CK2 is required for the interaction with PACS1 and the targeting to the base region of cilia. Widespread expression, with highest levels in pituitary gland, spinal cord, thyroid gland, testis, skeletal muscle, lymph node and trachea. Weakly expressed in heart, kidney and pancreas. Expressed in nasal epithelial cells (at protein level). Expressed in the renal collecting duct (at protein level).

Its subcellular location is the cell junction. The protein localises to the adherens junction. It is found in the cell projection. It localises to the cilium. The protein resides in the cytoplasm. Its subcellular location is the cytoskeleton. The protein localises to the cilium axoneme. It is found in the tight junction. Functionally, together with BCAR1 it may play a role in the control of epithelial cell polarity. Involved in the organization of apical junctions in kidney cells together with NPHP4 and RPGRIP1L/NPHP8. Does not seem to be strictly required for ciliogenesis. Seems to help to recruit PTK2B/PYK2 to cell matrix adhesions, thereby initiating phosphorylation of PTK2B/PYK2 and PTK2B/PYK2-dependent signaling. May play a role in the regulation of intraflagellar transport (IFT) during cilia assembly. Required for normal retina development. In connecting photoreceptor cilia influences the movement of some IFT proteins such as IFT88 and WDR19. Involved in spermatogenesis. The protein is Nephrocystin-1 (NPHP1) of Homo sapiens (Human).